Consider the following 416-residue polypeptide: Glutamyl-tRNA reductase (416 aa).

Residues 49–52, Ser-105, 110–112, and Gln-116 contribute to the substrate site; these read TCNR and EPQ. Cys-50 functions as the Nucleophile in the catalytic mechanism. 185 to 190 provides a ligand contact to NADP(+); that stretch reads GAGETI.

The protein belongs to the glutamyl-tRNA reductase family. In terms of assembly, homodimer.

The catalysed reaction is (S)-4-amino-5-oxopentanoate + tRNA(Glu) + NADP(+) = L-glutamyl-tRNA(Glu) + NADPH + H(+). The protein operates within porphyrin-containing compound metabolism; protoporphyrin-IX biosynthesis; 5-aminolevulinate from L-glutamyl-tRNA(Glu): step 1/2. In terms of biological role, catalyzes the NADPH-dependent reduction of glutamyl-tRNA(Glu) to glutamate 1-semialdehyde (GSA). This is Glutamyl-tRNA reductase from Shewanella amazonensis (strain ATCC BAA-1098 / SB2B).